The sequence spans 175 residues: ATP synthase subunit b, chloroplastic (175 aa).

A helical transmembrane segment spans residues 24–46 (VLNLAVVLAIVLTYVGDALRGLL).

It belongs to the ATPase B chain family. In terms of assembly, F-type ATPases have 2 components, F(1) - the catalytic core - and F(0) - the membrane proton channel. F(1) has five subunits: alpha(3), beta(3), gamma(1), delta(1), epsilon(1). F(0) has four main subunits: a(1), b(1), b'(1) and c(10-14). The alpha and beta chains form an alternating ring which encloses part of the gamma chain. F(1) is attached to F(0) by a central stalk formed by the gamma and epsilon chains, while a peripheral stalk is formed by the delta, b and b' chains.

The protein localises to the plastid. It localises to the chloroplast thylakoid membrane. In terms of biological role, f(1)F(0) ATP synthase produces ATP from ADP in the presence of a proton or sodium gradient. F-type ATPases consist of two structural domains, F(1) containing the extramembraneous catalytic core and F(0) containing the membrane proton channel, linked together by a central stalk and a peripheral stalk. During catalysis, ATP synthesis in the catalytic domain of F(1) is coupled via a rotary mechanism of the central stalk subunits to proton translocation. Component of the F(0) channel, it forms part of the peripheral stalk, linking F(1) to F(0). In Chlorella vulgaris (Green alga), this protein is ATP synthase subunit b, chloroplastic.